A 742-amino-acid polypeptide reads, in one-letter code: Glycine--tRNA ligase (742 aa).

Residues 73–129 (KLAPLRAAVKEYGDLIRDLKAKGAPKIDIDKAVVELKARKRLLEDTEIALAPKEASF) enclose the WHEP-TRS domain. Glu-309 serves as a coordination point for glycine. ATP contacts are provided by residues 341 to 343 (RNE) and 352 to 353 (RV). Glu-360 is a glycine binding site. 467 to 468 (EC) lines the ATP pocket. Residue 586-588 (EPS) coordinates glycine. ATP is bound at residue Arg-593.

It belongs to the class-II aminoacyl-tRNA synthetase family. Homodimer.

It localises to the cytoplasm. It is found in the cell projection. The protein localises to the axon. The protein resides in the secreted. Its subcellular location is the extracellular exosome. The enzyme catalyses tRNA(Gly) + glycine + ATP = glycyl-tRNA(Gly) + AMP + diphosphate. It carries out the reaction 2 ATP + H(+) = P(1),P(4)-bis(5'-adenosyl) tetraphosphate + diphosphate. In terms of biological role, catalyzes the ATP-dependent ligation of glycine to the 3'-end of its cognate tRNA, via the formation of an aminoacyl-adenylate intermediate (Gly-AMP). Also produces diadenosine tetraphosphate (Ap4A), a universal pleiotropic signaling molecule needed for cell regulation pathways, by direct condensation of 2 ATPs. Thereby, may play a special role in Ap4A homeostasis. The sequence is that of Glycine--tRNA ligase from Caenorhabditis elegans.